A 233-amino-acid chain; its full sequence is ATP-dependent dethiobiotin synthetase BioD (233 aa).

12–17 is a binding site for ATP; sequence GVGKTI. Thr16 is a Mg(2+) binding site. Residue Lys37 is part of the active site. Ser41 lines the substrate pocket. Residues Asp51, 112–115, and 202–204 each bind ATP; these read EGAG and PKL. 2 residues coordinate Mg(2+): Asp51 and Glu112.

Belongs to the dethiobiotin synthetase family. Homodimer. Mg(2+) is required as a cofactor.

The protein resides in the cytoplasm. It carries out the reaction (7R,8S)-7,8-diammoniononanoate + CO2 + ATP = (4R,5S)-dethiobiotin + ADP + phosphate + 3 H(+). It functions in the pathway cofactor biosynthesis; biotin biosynthesis; biotin from 7,8-diaminononanoate: step 1/2. In terms of biological role, catalyzes a mechanistically unusual reaction, the ATP-dependent insertion of CO2 between the N7 and N8 nitrogen atoms of 7,8-diaminopelargonic acid (DAPA, also called 7,8-diammoniononanoate) to form a ureido ring. In Bacillus velezensis (strain DSM 23117 / BGSC 10A6 / LMG 26770 / FZB42) (Bacillus amyloliquefaciens subsp. plantarum), this protein is ATP-dependent dethiobiotin synthetase BioD.